Reading from the N-terminus, the 678-residue chain is Zinc finger translocation-associated protein (678 aa).

Disordered stretches follow at residues 1-100 (MEPG…PGRD), 182-250 (LGVQ…GSRG), 329-417 (QPEA…HRRH), and 490-583 (LGPP…NYQP). Residues 62–78 (SAPLPSSRARGPASSGR) are compositionally biased toward low complexity. Basic and acidic residues predominate over residues 79–88 (KYSDHCEARA). A compositionally biased stretch (acidic residues) spans 187–201 (AEEEEEEEEEEEEEG). A Glycyl lysine isopeptide (Lys-Gly) (interchain with G-Cter in SUMO2) cross-link involves residue lysine 375. Acidic residues predominate over residues 388-398 (AEEEEELEEGE). Over residues 492 to 504 (PPRPESPQGPIPP) the composition is skewed to pro residues. Acidic residues-rich tracts occupy residues 513–529 (GGGD…EEWG) and 543–553 (AEEEEDEEDGQ). The segment covering 560–572 (LPPPPPPPPPPPP) has biased composition (pro residues). Over residues 573–583 (RSREQRRNYQP) the composition is skewed to basic and acidic residues.

The sequence is that of Zinc finger translocation-associated protein from Homo sapiens (Human).